The following is a 972-amino-acid chain: 116 kDa U5 small nuclear ribonucleoprotein component (972 aa).

Met1 carries the post-translational modification N-acetylmethionine. The disordered stretch occupies residues 1–54 (MDTDLYDEFGNYIGPELDSDEDDDELGRETKDLDEMDDDDDDDDIGDHDDDHPG). Composition is skewed to acidic residues over residues 17–26 (LDSDEDDDEL) and 34–48 (DEMDDDDDDDDIGDH). The residue at position 19 (Ser19) is a Phosphoserine. Residue Lys64 forms a Glycyl lysine isopeptide (Lys-Gly) (interchain with G-Cter in SUMO1); alternate linkage. A Glycyl lysine isopeptide (Lys-Gly) (interchain with G-Cter in SUMO2); alternate cross-link involves residue Lys64. A Phosphothreonine modification is found at Thr86. In terms of domain architecture, tr-type G spans 127 to 409 (ELIRNVTLCG…GIHLTKEELK (283 aa)). GTP is bound by residues 136-143 (GHLHHGKT), 204-208 (DTPGH), and 258-261 (NKID).

It belongs to the TRAFAC class translation factor GTPase superfamily. Classic translation factor GTPase family. EF-G/EF-2 subfamily. Component of the U5 snRNP and the U4/U6-U5 tri-snRNP complex, a building block of the spliceosome. The U4/U6-U5 tri-snRNP complex is composed of the U4, U6 and U5 snRNAs and at least PRPF3, PRPF4, PRPF6, PRPF8, PRPF31, SNRNP200, TXNL4A, SNRNP40, DDX23, CD2BP2, PPIH, SNU13, EFTUD2, SART1 and USP39. Component of the pre-catalytic, catalytic and post-catalytic spliceosome complexes. Component of the minor spliceosome, which splices U12-type introns. Within this complex, interacts with CRIPT. Interacts with ERBB4 and PRPF8. Interacts with PIH1D1. Interacts with RPAP3 and URI1 in a ZNHIT2-dependent manner. Interacts with NRDE2. Interacts with FAM50A. Interacts with UBL5.

The protein resides in the nucleus. Its function is as follows. Required for pre-mRNA splicing as component of the spliceosome, including pre-catalytic, catalytic and post-catalytic spliceosomal complexes. Component of the U5 snRNP and the U4/U6-U5 tri-snRNP complex, a building block of the spliceosome. As a component of the minor spliceosome, involved in the splicing of U12-type introns in pre-mRNAs. The sequence is that of 116 kDa U5 small nuclear ribonucleoprotein component (EFTUD2) from Pongo abelii (Sumatran orangutan).